A 385-amino-acid chain; its full sequence is Multidrug resistance protein MdtE (385 aa).

The N-terminal stretch at 1-20 is a signal peptide; that stretch reads MNRRRKLLIPLLFCGAMLTA. The N-palmitoyl cysteine moiety is linked to residue Cys21. Cys21 carries the S-diacylglycerol cysteine lipid modification.

This sequence belongs to the membrane fusion protein (MFP) (TC 8.A.1) family. As to quaternary structure, homotrimer. Part of the tripartite efflux system MdtEF-TolC, which is composed of an inner membrane transporter, MdtF, a membrane fusion protein, MdtE, and an outer membrane component, TolC. The complex forms a large protein conduit and can translocate molecules across both the inner and outer membranes.

The protein resides in the cell inner membrane. Part of the tripartite efflux system MdtEF-TolC, which confers resistance to compounds such as rhodamine 6G, erythromycin, doxorubicin, ethidium bromide, TPP, SDS, deoxycholate, crystal violet and benzalkonium. In Escherichia coli (strain K12), this protein is Multidrug resistance protein MdtE (mdtE).